The following is a 367-amino-acid chain: Uroporphyrinogen decarboxylase (367 aa).

Residue M1 is modified to N-acetylmethionine. Residues R37, A39, R41, R50, D86, Y164, S219, and H339 each coordinate coproporphyrinogen I. Coproporphyrinogen III contacts are provided by R37, A39, and R41. Residues D86, Y164, S219, and H339 each contribute to the coproporphyrinogen III site.

It belongs to the uroporphyrinogen decarboxylase family. In terms of assembly, homodimer.

The protein resides in the cytoplasm. It localises to the cytosol. The catalysed reaction is uroporphyrinogen III + 4 H(+) = coproporphyrinogen III + 4 CO2. It catalyses the reaction uroporphyrinogen I + 4 H(+) = coproporphyrinogen I + 4 CO2. It participates in porphyrin-containing compound metabolism; protoporphyrin-IX biosynthesis; coproporphyrinogen-III from 5-aminolevulinate: step 4/4. Catalyzes the sequential decarboxylation of the four acetate side chains of uroporphyrinogen to form coproporphyrinogen and participates in the fifth step in the heme biosynthetic pathway. Isomer I or isomer III of uroporphyrinogen may serve as substrate, but only coproporphyrinogen III can ultimately be converted to heme. In vitro also decarboxylates pentacarboxylate porphyrinogen I. The protein is Uroporphyrinogen decarboxylase of Homo sapiens (Human).